The chain runs to 165 residues: Endoribonuclease YbeY (165 aa).

Zn(2+) is bound by residues H130, H134, and H140.

This sequence belongs to the endoribonuclease YbeY family. Zn(2+) is required as a cofactor.

The protein localises to the cytoplasm. Functionally, single strand-specific metallo-endoribonuclease involved in late-stage 70S ribosome quality control and in maturation of the 3' terminus of the 16S rRNA. In Streptococcus pneumoniae serotype 2 (strain D39 / NCTC 7466), this protein is Endoribonuclease YbeY.